Here is a 309-residue protein sequence, read N- to C-terminus: Putative taste receptor type 2 member 33 (309 aa).

A topological domain (extracellular) is located at residue Met-1. A helical membrane pass occupies residues 2 to 22 (VYFLPIIFSILVVFAFVLGNF). Residues 23-46 (SNGFIALVNVIDWVKRQKISSADQ) lie on the Cytoplasmic side of the membrane. Residues 47–67 (ILTALVVSRVGLLWVILLHWY) traverse the membrane as a helical segment. Over 68-86 (ANVFNSALYSLEVRIVASN) the chain is Extracellular. The N-linked (GlcNAc...) asparagine glycan is linked to Asn-86. A helical transmembrane segment spans residues 87-107 (ISAVINHFSIWLAASLSIFYL). At 108 to 127 (LKIANFSNLIFLHLKKRIKS) the chain is on the cytoplasmic side. The helical transmembrane segment at 128 to 148 (VVLVILLGPLVFLICNLAVIT) threads the bilayer. At 149-181 (MDERVWTKEYEGNVTWKIKLRNAIHLSSLTVTT) the chain is on the extracellular side. Asn-161 carries an N-linked (GlcNAc...) asparagine glycan. Residues 182–202 (LANLIPFTLSLICFLLLICSL) form a helical membrane-spanning segment. The Cytoplasmic portion of the chain corresponds to 203–229 (CKHLKKMQLHSKGSQDPSTKVHIKALQ). The helical transmembrane segment at 230–250 (TVISFLMLCAIYFLSIMISVW) threads the bilayer. Over 251–259 (NLRSLENKP) the chain is Extracellular. Residues 260-280 (VFMFCKAIRFSYPSIHPFILI) form a helical membrane-spanning segment. Topologically, residues 281 to 309 (WGNKKLKQTFLSVFWQVRYWVKGEKPSSP) are cytoplasmic.

The protein belongs to the G-protein coupled receptor T2R family.

The protein resides in the membrane. In terms of biological role, putative taste receptor which may play a role in the perception of bitterness. The sequence is that of Putative taste receptor type 2 member 33 from Homo sapiens (Human).